A 354-amino-acid polypeptide reads, in one-letter code: Tetraacyldisaccharide 4'-kinase (354 aa).

53 to 60 (AWGGTGKT) is a binding site for ATP.

The protein belongs to the LpxK family.

It carries out the reaction a lipid A disaccharide + ATP = a lipid IVA + ADP + H(+). Its pathway is glycolipid biosynthesis; lipid IV(A) biosynthesis; lipid IV(A) from (3R)-3-hydroxytetradecanoyl-[acyl-carrier-protein] and UDP-N-acetyl-alpha-D-glucosamine: step 6/6. In terms of biological role, transfers the gamma-phosphate of ATP to the 4'-position of a tetraacyldisaccharide 1-phosphate intermediate (termed DS-1-P) to form tetraacyldisaccharide 1,4'-bis-phosphate (lipid IVA). The sequence is that of Tetraacyldisaccharide 4'-kinase from Nitratidesulfovibrio vulgaris (strain ATCC 29579 / DSM 644 / CCUG 34227 / NCIMB 8303 / VKM B-1760 / Hildenborough) (Desulfovibrio vulgaris).